The primary structure comprises 337 residues: Putative tRNA (cytidine(32)/guanosine(34)-2'-O)-methyltransferase (337 aa).

S-adenosyl-L-methionine is bound by residues glycine 53, tryptophan 55, aspartate 76, aspartate 92, and aspartate 117. Catalysis depends on lysine 157, which acts as the Proton acceptor. Basic and acidic residues-rich tracts occupy residues 304-318 (LKAE…KKTP) and 327-337 (ELEKAAEKFQL). The interval 304-337 (LKAELSRGKDQKKTPAENVPSVEELEKAAEKFQL) is disordered.

The protein belongs to the class I-like SAM-binding methyltransferase superfamily. RNA methyltransferase RlmE family. TRM7 subfamily.

The protein resides in the cytoplasm. The catalysed reaction is cytidine(32)/guanosine(34) in tRNA + 2 S-adenosyl-L-methionine = 2'-O-methylcytidine(32)/2'-O-methylguanosine(34) in tRNA + 2 S-adenosyl-L-homocysteine + 2 H(+). Functionally, methylates the 2'-O-ribose of nucleotides at positions 32 and 34 of the tRNA anticodon loop of substrate tRNAs. This is Putative tRNA (cytidine(32)/guanosine(34)-2'-O)-methyltransferase from Caenorhabditis elegans.